Here is a 320-residue protein sequence, read N- to C-terminus: Probable NAD(P)H-dependent D-xylose reductase xyl1 (320 aa).

Tyrosine 50 serves as the catalytic Proton donor. Position 112 (histidine 112) interacts with substrate. NAD(+) is bound by residues 167–168 (SN), 216–225 (SSFGPLSFLE), and 272–282 (KSNNPTRLSQN).

The protein belongs to the aldo/keto reductase family.

The catalysed reaction is xylitol + NAD(+) = D-xylose + NADH + H(+). The enzyme catalyses xylitol + NADP(+) = D-xylose + NADPH + H(+). It functions in the pathway carbohydrate metabolism; D-xylose degradation. In terms of biological role, catalyzes the initial reaction in the xylose utilization pathway by reducing D-xylose into xylitol. Xylose is a major component of hemicelluloses such as xylan. Most fungi utilize D-xylose via three enzymatic reactions, xylose reductase (XR), xylitol dehydrogenase (XDH), and xylulokinase, to form xylulose 5-phosphate, which enters pentose phosphate pathway. The polypeptide is Probable NAD(P)H-dependent D-xylose reductase xyl1 (xyl1) (Aspergillus terreus (strain NIH 2624 / FGSC A1156)).